The following is a 382-amino-acid chain: Gap junction alpha-1 protein (382 aa).

At 2–23 (GGWSALAKLLGKVQAYSPAGGK) the chain is on the cytoplasmic side. At serine 5 the chain carries Phosphoserine. The helical transmembrane segment at 24-44 (VWLSVLFIFRILLLGTAVESA) threads the bilayer. Residues 45 to 76 (WGDEQSAFRCNTQQPGCENVCYDKSFPISHVR) lie on the Extracellular side of the membrane. 2 disulfides stabilise this stretch: cysteine 54/cysteine 192 and cysteine 187/cysteine 198. The helical transmembrane segment at 77–97 (FWVLQIIFVSVPTLLYLAHVF) threads the bilayer. The Cytoplasmic portion of the chain corresponds to 98–155 (YVMRKEEKLNKKEEELKVAQTDGANVDMHLKQIEIKKFKYGIEEHGKVKMRGGLLRTY). Lysine 144 participates in a covalent cross-link: Glycyl lysine isopeptide (Lys-Gly) (interchain with G-Cter in SUMO). Residues 156–176 (IISILFKSVFEVAFLLIQWYI) form a helical membrane-spanning segment. Residues 177–207 (YGFSLSAVYTCKREPCPHQVDCFLSRPTEKT) lie on the Extracellular side of the membrane. The helical transmembrane segment at 208-228 (IFIIFMLVVSLVSLALNIIEL) threads the bilayer. The Cytoplasmic segment spans residues 229–382 (FYVFFKGVKD…SRPRPDDLEI (154 aa)). Lysine 237 participates in a covalent cross-link: Glycyl lysine isopeptide (Lys-Gly) (interchain with G-Cter in SUMO). The interaction with NOV stretch occupies residues 244–382 (SDPYHATTGP…SRPRPDDLEI (139 aa)). Tyrosine 247 carries the phosphotyrosine modification. A phosphoserine mark is found at serine 255, serine 257, and serine 262. The interval 264–382 (EYAYFNGCSS…SRPRPDDLEI (119 aa)) is interaction with UBQLN4. The residue at position 271 (cysteine 271) is an S-nitrosocysteine. Threonine 275 is subject to Phosphothreonine. Residues serine 306 and serine 314 each carry the phosphoserine modification. A compositionally biased stretch (polar residues) spans 317-332 (QNRMGQAGSTISNSHA). The tract at residues 317–382 (QNRMGQAGST…SRPRPDDLEI (66 aa)) is disordered. A Phosphoserine; by CK1 modification is found at serine 325. Threonine 326 bears the Phosphothreonine mark. Phosphoserine; by CK1 is present on residues serine 328 and serine 330. Phosphoserine is present on residues serine 344 and serine 365. The segment covering 362–374 (RPSSRASSRASSR) has biased composition (low complexity). A Phosphoserine; by PKC/PRKCG and PKC/PRKCD modification is found at serine 368. Residues serine 369 and serine 373 each carry the phosphoserine modification.

It belongs to the connexin family. Alpha-type (group II) subfamily. In terms of assembly, a connexon is composed of a hexamer of connexins. Interacts with SGSM3. Interacts with RIC1/CIP150. Interacts with CNST and CSNK1D. Interacts (via C-terminus) with TJP1. Interacts (via C-terminus) with SRC (via SH3 domain). Interacts (not ubiquitinated) with UBQLN4 (via UBA domain). Interacts with NOV. Interacts with TMEM65. Interacts with ANK3/ANKG and PKP2. Phosphorylation at Ser-325, Ser-328 and Ser-330 by CK1 modulates gap junction assembly. Phosphorylated at Ser-368 by PRKCG; phosphorylation induces disassembly of gap junction plaques and inhibition of gap junction activity. Phosphorylation at Ser-368 by PRKCD triggers its internalization into small vesicles leading to proteasome-mediated degradation. Post-translationally, sumoylated with SUMO1, SUMO2 and SUMO3, which may regulate the level of functional Cx43 gap junctions at the plasma membrane. May be desumoylated by SENP1 or SENP2. In terms of processing, S-nitrosylation at Cys-271 is enriched at the muscle endothelial gap junction in arteries, it augments channel permeability and may regulate of smooth muscle cell to endothelial cell communication. Acetylated in the developing cortex; leading to delocalization from the cell membrane.

The protein localises to the cell membrane. It is found in the cell junction. Its subcellular location is the gap junction. The protein resides in the endoplasmic reticulum. In terms of biological role, gap junction protein that acts as a regulator of bladder capacity. A gap junction consists of a cluster of closely packed pairs of transmembrane channels, the connexons, through which materials of low MW diffuse from one cell to a neighboring cell. May play a critical role in the physiology of hearing by participating in the recycling of potassium to the cochlear endolymph. Negative regulator of bladder functional capacity: acts by enhancing intercellular electrical and chemical transmission, thus sensitizing bladder muscles to cholinergic neural stimuli and causing them to contract. May play a role in cell growth inhibition through the regulation of NOV expression and localization. Plays an essential role in gap junction communication in the ventricles. The polypeptide is Gap junction alpha-1 protein (GJA1) (Canis lupus familiaris (Dog)).